A 472-amino-acid polypeptide reads, in one-letter code: UDP-N-acetylmuramate--L-alanine ligase (472 aa).

Gly-118–Thr-124 lines the ATP pocket.

The protein belongs to the MurCDEF family.

It is found in the cytoplasm. It catalyses the reaction UDP-N-acetyl-alpha-D-muramate + L-alanine + ATP = UDP-N-acetyl-alpha-D-muramoyl-L-alanine + ADP + phosphate + H(+). Its pathway is cell wall biogenesis; peptidoglycan biosynthesis. Cell wall formation. The sequence is that of UDP-N-acetylmuramate--L-alanine ligase from Methylococcus capsulatus (strain ATCC 33009 / NCIMB 11132 / Bath).